We begin with the raw amino-acid sequence, 343 residues long: Biotin synthase (343 aa).

The region spanning 64 to 291 (NTVQLSTLLS…RAMVRLSAGR (228 aa)) is the Radical SAM core domain. [4Fe-4S] cluster-binding residues include C79, C83, and C86. [2Fe-2S] cluster contacts are provided by C123, C154, C214, and R286.

The protein belongs to the radical SAM superfamily. Biotin synthase family. As to quaternary structure, homodimer. The cofactor is [4Fe-4S] cluster. It depends on [2Fe-2S] cluster as a cofactor.

It carries out the reaction (4R,5S)-dethiobiotin + (sulfur carrier)-SH + 2 reduced [2Fe-2S]-[ferredoxin] + 2 S-adenosyl-L-methionine = (sulfur carrier)-H + biotin + 2 5'-deoxyadenosine + 2 L-methionine + 2 oxidized [2Fe-2S]-[ferredoxin]. It participates in cofactor biosynthesis; biotin biosynthesis; biotin from 7,8-diaminononanoate: step 2/2. In terms of biological role, catalyzes the conversion of dethiobiotin (DTB) to biotin by the insertion of a sulfur atom into dethiobiotin via a radical-based mechanism. The chain is Biotin synthase from Cupriavidus necator (strain ATCC 17699 / DSM 428 / KCTC 22496 / NCIMB 10442 / H16 / Stanier 337) (Ralstonia eutropha).